Reading from the N-terminus, the 204-residue chain is Holliday junction branch migration complex subunit RuvA (204 aa).

The segment at 1–64 (MIGRVTGILV…EDAHLLFGFS (64 aa)) is domain I. The tract at residues 65–143 (HKQDRSLFRE…GLQQTDFFIK (79 aa)) is domain II. Residues 144 to 155 (SSHLPGIKCSKL) form a flexible linker region. A domain III region spans residues 156 to 204 (DQSLQLDEAVSALIALGYKPIEAEKMVKKVLKADLTSEQLIREALKAAL).

The protein belongs to the RuvA family. Homotetramer. Forms an RuvA(8)-RuvB(12)-Holliday junction (HJ) complex. HJ DNA is sandwiched between 2 RuvA tetramers; dsDNA enters through RuvA and exits via RuvB. An RuvB hexamer assembles on each DNA strand where it exits the tetramer. Each RuvB hexamer is contacted by two RuvA subunits (via domain III) on 2 adjacent RuvB subunits; this complex drives branch migration. In the full resolvosome a probable DNA-RuvA(4)-RuvB(12)-RuvC(2) complex forms which resolves the HJ.

The protein resides in the cytoplasm. In terms of biological role, the RuvA-RuvB-RuvC complex processes Holliday junction (HJ) DNA during genetic recombination and DNA repair, while the RuvA-RuvB complex plays an important role in the rescue of blocked DNA replication forks via replication fork reversal (RFR). RuvA specifically binds to HJ cruciform DNA, conferring on it an open structure. The RuvB hexamer acts as an ATP-dependent pump, pulling dsDNA into and through the RuvAB complex. HJ branch migration allows RuvC to scan DNA until it finds its consensus sequence, where it cleaves and resolves the cruciform DNA. This chain is Holliday junction branch migration complex subunit RuvA, found in Histophilus somni (strain 2336) (Haemophilus somnus).